The primary structure comprises 218 residues: Adenylate kinase (218 aa).

10–15 (GAGKGT) provides a ligand contact to ATP. Positions 30–59 (STGDMIRETIKSGSVLGQELKKVLDAGELV) are NMP. AMP-binding positions include Thr-31, Arg-36, 57-59 (ELV), and Gln-92. An LID region spans residues 122–159 (GRRIHPASGRTYHTKFNPPKVADKDDVTGEPLITRTDD). ATP contacts are provided by residues Arg-123 and 132 to 133 (TY). Residues Arg-156 and Arg-167 each contribute to the AMP site. Residue Gln-202 participates in ATP binding.

Belongs to the adenylate kinase family. As to quaternary structure, monomer.

It is found in the cytoplasm. It carries out the reaction AMP + ATP = 2 ADP. The protein operates within purine metabolism; AMP biosynthesis via salvage pathway; AMP from ADP: step 1/1. Its function is as follows. Catalyzes the reversible transfer of the terminal phosphate group between ATP and AMP. Plays an important role in cellular energy homeostasis and in adenine nucleotide metabolism. The chain is Adenylate kinase from Francisella tularensis subsp. holarctica (strain LVS).